The primary structure comprises 137 residues: Peptidyl-tRNA hydrolase ArfB (137 aa).

Residues 102–137 are disordered; the sequence is EKKRRPTKPTLGSKTRRLEGKARRSTVKAGRGKVDF.

This sequence belongs to the prokaryotic/mitochondrial release factor family. As to quaternary structure, associated with 70S ribosomes and polysomes.

It localises to the cytoplasm. The catalysed reaction is an N-acyl-L-alpha-aminoacyl-tRNA + H2O = an N-acyl-L-amino acid + a tRNA + H(+). Its function is as follows. Rescues stalled ribosomes. Can hydrolyze peptidyl-tRNA on ribosomes stalled by both non-stop mRNAs and mRNAs that contain rare codon clusters. In Pseudomonas putida (Arthrobacter siderocapsulatus), this protein is Peptidyl-tRNA hydrolase ArfB (arfB).